Reading from the N-terminus, the 455-residue chain is Argininosuccinate lyase (455 aa).

It belongs to the lyase 1 family. Argininosuccinate lyase subfamily.

It is found in the cytoplasm. The enzyme catalyses 2-(N(omega)-L-arginino)succinate = fumarate + L-arginine. Its pathway is amino-acid biosynthesis; L-arginine biosynthesis; L-arginine from L-ornithine and carbamoyl phosphate: step 3/3. The sequence is that of Argininosuccinate lyase from Shewanella sp. (strain ANA-3).